The sequence spans 73 residues: IVCHTTATSPISAVTCPPGENLCYRKMCDAICSSRGKVVELGCAATCPSKKPYEEVTCCSNDKCNPHPKQRPG.

Disulfide bonds link Cys-3-Cys-23, Cys-16-Cys-43, Cys-28-Cys-32, Cys-47-Cys-58, and Cys-59-Cys-64.

Belongs to the three-finger toxin family. Long-chain subfamily. Type II alpha-neurotoxin sub-subfamily. Monomer in solution, homodimer in crystal state. Expressed by the venom gland.

It localises to the secreted. In terms of biological role, binds with high affinity to muscular (alpha-1/CHRNA1) and neuronal (alpha-7/CHRNA7) nicotinic acetylcholine receptor (nAChR) and inhibits acetylcholine from binding to the receptor, thereby impairing neuromuscular and neuronal transmission. Mice injected with this toxin develop flaccid paralysis followed by death. Irreversibly inhibits twitches in a concentration-dependent manner in rat phrenic nerve-hemidiaphragm and chick biventer cervicis muscle. The sequence is that of Alpha-bungarotoxin N3 from Bungarus candidus (Malayan krait).